Here is a 154-residue protein sequence, read N- to C-terminus: Myoglobin (154 aa).

The Globin domain occupies 2–148; the sequence is GLSDGEWQLV…FRNDMAAKYK (147 aa). A Phosphoserine modification is found at Ser4. A nitrite-binding site is contributed by His65. His65 serves as a coordination point for O2. At Thr68 the chain carries Phosphothreonine. His94 is a heme b binding site.

The protein belongs to the globin family. As to quaternary structure, monomeric.

It is found in the cytoplasm. The protein resides in the sarcoplasm. It carries out the reaction Fe(III)-heme b-[protein] + nitric oxide + H2O = Fe(II)-heme b-[protein] + nitrite + 2 H(+). The enzyme catalyses H2O2 + AH2 = A + 2 H2O. Its function is as follows. Monomeric heme protein which primary function is to store oxygen and facilitate its diffusion within muscle tissues. Reversibly binds oxygen through a pentacoordinated heme iron and enables its timely and efficient release as needed during periods of heightened demand. Depending on the oxidative conditions of tissues and cells, and in addition to its ability to bind oxygen, it also has a nitrite reductase activity whereby it regulates the production of bioactive nitric oxide. Under stress conditions, like hypoxia and anoxia, it also protects cells against reactive oxygen species thanks to its pseudoperoxidase activity. This Ochotona curzoniae (Black-lipped pika) protein is Myoglobin (MB).